Consider the following 130-residue polypeptide: Large ribosomal subunit protein bL21 (130 aa).

Residues 103-130 (AGGKTSKAEPRKTRKAEPAAESAPAAAE) are disordered. Over residues 108–120 (SKAEPRKTRKAEP) the composition is skewed to basic and acidic residues. Residues 121–130 (AAESAPAAAE) show a composition bias toward low complexity.

The protein belongs to the bacterial ribosomal protein bL21 family. Part of the 50S ribosomal subunit. Contacts protein L20.

Functionally, this protein binds to 23S rRNA in the presence of protein L20. This Methylorubrum extorquens (strain CM4 / NCIMB 13688) (Methylobacterium extorquens) protein is Large ribosomal subunit protein bL21.